The primary structure comprises 155 residues: MLP-like protein 423 (155 aa).

The protein belongs to the MLP family.

This Arabidopsis thaliana (Mouse-ear cress) protein is MLP-like protein 423 (MLP423).